The following is a 513-amino-acid chain: ATP synthase subunit alpha 2 (513 aa).

An ATP-binding site is contributed by 169–176; that stretch reads GDRQVGKT.

This sequence belongs to the ATPase alpha/beta chains family. As to quaternary structure, F-type ATPases have 2 components, CF(1) - the catalytic core - and CF(0) - the membrane proton channel. CF(1) has five subunits: alpha(3), beta(3), gamma(1), delta(1), epsilon(1). CF(0) has three main subunits: a(1), b(2) and c(9-12). The alpha and beta chains form an alternating ring which encloses part of the gamma chain. CF(1) is attached to CF(0) by a central stalk formed by the gamma and epsilon chains, while a peripheral stalk is formed by the delta and b chains.

The protein resides in the cell inner membrane. The enzyme catalyses ATP + H2O + 4 H(+)(in) = ADP + phosphate + 5 H(+)(out). Functionally, produces ATP from ADP in the presence of a proton gradient across the membrane. The alpha chain is a regulatory subunit. This chain is ATP synthase subunit alpha 2, found in Psychromonas ingrahamii (strain DSM 17664 / CCUG 51855 / 37).